Here is a 450-residue protein sequence, read N- to C-terminus: Casein kinase 1-like protein 1 (450 aa).

Residues 9–278 (FRLGRKIGSG…LKRIFRDLFI (270 aa)) form the Protein kinase domain. ATP-binding positions include 15–23 (IGSGSFGEI) and Lys-38. Residue Asp-128 is the Proton acceptor of the active site. The tract at residues 311–450 (AVGTSAALPP…LQVSDEHHPH (140 aa)) is disordered. Basic and acidic residues predominate over residues 328 to 342 (YTGEEEGRPHMESSR). The span at 349–365 (LDNSGNISNQPTSSSAR) shows a compositional bias: polar residues. Positions 371–382 (SSSLFAQSAGSS) are enriched in low complexity.

It belongs to the protein kinase superfamily. CK1 Ser/Thr protein kinase family. Casein kinase I subfamily. Monomer. Post-translationally, autophosphorylated. In terms of tissue distribution, expressed in flowers.

It is found in the cytoplasm. Its subcellular location is the cell junction. It localises to the plasmodesma. It catalyses the reaction L-seryl-[protein] + ATP = O-phospho-L-seryl-[protein] + ADP + H(+). The catalysed reaction is L-threonyl-[protein] + ATP = O-phospho-L-threonyl-[protein] + ADP + H(+). In terms of biological role, casein kinases are operationally defined by their preferential utilization of acidic proteins such as caseins as substrates. It can phosphorylate a large number of proteins. The chain is Casein kinase 1-like protein 1 from Arabidopsis thaliana (Mouse-ear cress).